Reading from the N-terminus, the 261-residue chain is Ribonuclease PH (261 aa).

Residues R87 and 125 to 127 (GTR) each bind phosphate.

This sequence belongs to the RNase PH family. As to quaternary structure, homohexameric ring arranged as a trimer of dimers.

The enzyme catalyses tRNA(n+1) + phosphate = tRNA(n) + a ribonucleoside 5'-diphosphate. Functionally, phosphorolytic 3'-5' exoribonuclease that plays an important role in tRNA 3'-end maturation. Removes nucleotide residues following the 3'-CCA terminus of tRNAs; can also add nucleotides to the ends of RNA molecules by using nucleoside diphosphates as substrates, but this may not be physiologically important. Probably plays a role in initiation of 16S rRNA degradation (leading to ribosome degradation) during starvation. In Thermoanaerobacter pseudethanolicus (strain ATCC 33223 / 39E) (Clostridium thermohydrosulfuricum), this protein is Ribonuclease PH.